Reading from the N-terminus, the 1411-residue chain is Tectonin beta-propeller repeat-containing protein 2 (1411 aa).

WD repeat units lie at residues 23-66 (IPTK…HLNQ), 67-114 (MRKY…PGRN), 115-161 (KQLR…LDQG), 162-203 (LCNS…EKSV), 204-265 (RQIG…AGGV), 266-309 (KPFE…EYSI), and 310-343 (YLLDTVNQATVAGLEGSGDIVSVSCTENEIFFLK). 4 disordered regions span residues 379–439 (QAEK…GSQP), 463–542 (VKRK…QENT), 579–637 (RELL…GPQS), and 758–779 (YAHGLPSSSSETSVTELGPSCS). The span at 400 to 420 (SSVASEPRSRSSSLNSTDSGS) shows a compositional bias: low complexity. Composition is skewed to polar residues over residues 475 to 489 (GSRSTCHSSLESTPC), 496 to 542 (SPQS…QENT), 608 to 621 (PNSTQLPFQEQDSS), and 763 to 779 (PSSSSETSVTELGPSCS). TECPR repeat units lie at residues 945 to 976 (NVVWALTEQRALLYREGVSSFCPEGEQWKCDI), 994 to 1027 (QTLWALDIHGNLWFRTGIISKKPQGDDDHWWQVS), 1179 to 1209 (DALWALDSLGQVFIRTLSKSCPTGMHWTRLD), 1226 to 1259 (QHIWACDSRGGVYFRVGTQPLNPSLMLPAWIMIE), 1279 to 1310 (QMLWVLDSRWNVHVRTGITEEMPVGTAWEHVP), and 1322 to 1353 (RTVWARCPNGDLARRYGVTDKNPAGDYWKKIP). The disordered stretch occupies residues 1388–1411 (HGTQKSSQAAMPHPEDLEDEWEVI).

The protein belongs to the WD repeat KIAA0329 family. In terms of assembly, interacts with the ATG8 family members GABARAP, GABARAPL1, GABARAPL2, MAP1LC3B and MAP1LC3C. In terms of tissue distribution, detected in skin fibroblast (at protein level).

Functionally, probably plays a role as positive regulator of autophagy. In Homo sapiens (Human), this protein is Tectonin beta-propeller repeat-containing protein 2 (TECPR2).